The chain runs to 457 residues: Phosphoglucosamine mutase (457 aa).

Catalysis depends on Ser103, which acts as the Phosphoserine intermediate. The Mg(2+) site is built by Ser103, Asp244, Asp246, and Asp248. The residue at position 103 (Ser103) is a Phosphoserine.

The protein belongs to the phosphohexose mutase family. Mg(2+) serves as cofactor. Post-translationally, activated by phosphorylation.

The enzyme catalyses alpha-D-glucosamine 1-phosphate = D-glucosamine 6-phosphate. Catalyzes the conversion of glucosamine-6-phosphate to glucosamine-1-phosphate. The sequence is that of Phosphoglucosamine mutase from Granulibacter bethesdensis (strain ATCC BAA-1260 / CGDNIH1).